The sequence spans 221 residues: Cytidylate kinase (221 aa).

ATP is bound at residue 11-19 (GPSGVGKST).

The protein belongs to the cytidylate kinase family. Type 1 subfamily.

It localises to the cytoplasm. The enzyme catalyses CMP + ATP = CDP + ADP. It carries out the reaction dCMP + ATP = dCDP + ADP. The polypeptide is Cytidylate kinase (Mycoplasmopsis pulmonis (strain UAB CTIP) (Mycoplasma pulmonis)).